The chain runs to 46 residues: Mu-segestritoxin-Sf1h (46 aa).

Disulfide bonds link cysteine 3/cysteine 19, cysteine 10/cysteine 22, cysteine 18/cysteine 42, and cysteine 24/cysteine 40. Residues 31 to 33 form a keys region for toxin activity region; the sequence is RPW.

This sequence belongs to the neurotoxin 16 (SFI) family. In terms of tissue distribution, expressed by the venom gland.

Its subcellular location is the secreted. Functionally, insecticidal toxin. It inhibits insect voltage-gated sodium channels (Nav) by partially blocking the channel pore in DUM neurons from the American cockroach, not by acting as a gating modifier. The inhibition is only partially reversible after prolonged washout. In vivo, the toxin causes flaccid paralysis followed by death when injected into Heliothis virescens larvae. It also causes uncoordinated movements followed by full paralysis to sheep blowflies (Lucilia cuprina). When the toxin is fused to snowdrop lectin, it is orally active against larvae of the tomato moth (Laconobia oleracea), the rice brown planthopper (Nilaparvata lugens), and the peach-potato aphid (Myzus persicae). This is Mu-segestritoxin-Sf1h from Segestria florentina (Tube-web spider).